A 253-amino-acid polypeptide reads, in one-letter code: MGRKFFVGGNWKCNGTVEQVEAIVQTLNAGQIVSPDVVEVVVSPPYVFLPIVKAKLRPEIQVAAQNCWVKKGGAFTGEVSAEMLANLGVPWVILGHSERRSLLGESSEFVGEKVAYALAQGLKVIACVGETLEQREAGSTMEVVAEQTKAIAGKIKDWSNGVVAYEPVWAIGTGKVATPAQAQEVHANLRDWLKTNVSPEVAESTRIIYGGSVTGASCKELAAQADVDGFLVGGASLKPEFIDIINAAAVKSA.

Residues asparagine 10 and lysine 12 each contribute to the substrate site. Catalysis depends on histidine 96, which acts as the Electrophile. Catalysis depends on glutamate 166, which acts as the Proton acceptor.

It belongs to the triosephosphate isomerase family. Homodimer. Starchy endosperm.

It localises to the cytoplasm. The enzyme catalyses D-glyceraldehyde 3-phosphate = dihydroxyacetone phosphate. Its pathway is carbohydrate biosynthesis; gluconeogenesis. It participates in carbohydrate degradation; glycolysis; D-glyceraldehyde 3-phosphate from glycerone phosphate: step 1/1. In Hordeum vulgare (Barley), this protein is Triosephosphate isomerase, cytosolic.